The chain runs to 257 residues: ECF RNA polymerase sigma factor SigE (257 aa).

The tract at residues 87–153 (LVRQHADRVY…FLDMVRRRAR (67 aa)) is sigma-70 factor domain-2. Residues 111–114 (DLTQ) carry the Polymerase core binding motif. The segment at 186-236 (LQAALASLPPEFRAAVVLCDIEGLSYEEIGATLGVKLGTVRSRIHRGRQAL) is sigma-70 factor domain-4. Positions 211–230 (YEEIGATLGVKLGTVRSRIH) form a DNA-binding region, H-T-H motif.

It belongs to the sigma-70 factor family. ECF subfamily. In terms of assembly, interacts transiently with the RNA polymerase catalytic core formed by RpoA, RpoB, RpoC and RpoZ (2 alpha, 1 beta, 1 beta' and 1 omega subunit) to form the RNA polymerase holoenzyme that can initiate transcription. Interacts (via sigma-70 factor domain 4) with cognate anti-sigma-E factor RseA under reducing conditions, which stops the sigma factor from functioning.

Its function is as follows. Sigma factors are initiation factors that promote the attachment of RNA polymerase to specific initiation sites and are then released. Extracytoplasmic function (ECF) sigma factors are held in an inactive form by an anti-sigma factor until released. Responds to surface stress (H(2)O(2)). The polypeptide is ECF RNA polymerase sigma factor SigE (sigE) (Mycobacterium tuberculosis (strain ATCC 35801 / TMC 107 / Erdman)).